A 304-amino-acid chain; its full sequence is MQQTTIQRSITFSGIGVHSGQCLNVTLHPASENTGIVFEVITGDTRHTLIPSPSAVIATKLATTIGNKNITISTVEHLLASIRGLEIDNIRICVEGAEIPIMDGSAKIFTNELLQAGIKYLPATKKILQVIKPVEFIKGEKRIRALPYNGFKLDYTINYIHPIIGHQRLVLDVTPTTFLSIANARTYGFLKDVEQMLKNGLAQGGSLENAIVLDSTKVINPEGLRYPDEFVRHKALDFIGDMAMMHLPLQGYFEIYCSGHQHNNQFLHKLQDENALALVTLEGEKTQNLYQNITPLYNDVLALL.

3 residues coordinate Zn(2+): H77, H233, and D237. H260 acts as the Proton donor in catalysis.

Belongs to the LpxC family. It depends on Zn(2+) as a cofactor.

It carries out the reaction a UDP-3-O-[(3R)-3-hydroxyacyl]-N-acetyl-alpha-D-glucosamine + H2O = a UDP-3-O-[(3R)-3-hydroxyacyl]-alpha-D-glucosamine + acetate. It participates in glycolipid biosynthesis; lipid IV(A) biosynthesis; lipid IV(A) from (3R)-3-hydroxytetradecanoyl-[acyl-carrier-protein] and UDP-N-acetyl-alpha-D-glucosamine: step 2/6. Functionally, catalyzes the hydrolysis of UDP-3-O-myristoyl-N-acetylglucosamine to form UDP-3-O-myristoylglucosamine and acetate, the committed step in lipid A biosynthesis. The polypeptide is UDP-3-O-acyl-N-acetylglucosamine deacetylase (Lawsonia intracellularis (strain PHE/MN1-00)).